Reading from the N-terminus, the 277-residue chain is Thymidylate synthase (277 aa).

Residue Arg-21 coordinates dUMP. His-51 is a binding site for (6R)-5,10-methylene-5,6,7,8-tetrahydrofolate. Position 126 to 127 (126 to 127) interacts with dUMP; the sequence is RR. Residue Cys-159 is the Nucleophile of the active site. DUMP contacts are provided by residues 179–182, Asn-190, and 220–222; these read RSSD and HAY. Asp-182 is a (6R)-5,10-methylene-5,6,7,8-tetrahydrofolate binding site. Ala-276 contributes to the (6R)-5,10-methylene-5,6,7,8-tetrahydrofolate binding site.

The protein belongs to the thymidylate synthase family. Bacterial-type ThyA subfamily. Homodimer.

Its subcellular location is the cytoplasm. It carries out the reaction dUMP + (6R)-5,10-methylene-5,6,7,8-tetrahydrofolate = 7,8-dihydrofolate + dTMP. The protein operates within pyrimidine metabolism; dTTP biosynthesis. In terms of biological role, catalyzes the reductive methylation of 2'-deoxyuridine-5'-monophosphate (dUMP) to 2'-deoxythymidine-5'-monophosphate (dTMP) while utilizing 5,10-methylenetetrahydrofolate (mTHF) as the methyl donor and reductant in the reaction, yielding dihydrofolate (DHF) as a by-product. This enzymatic reaction provides an intracellular de novo source of dTMP, an essential precursor for DNA biosynthesis. This chain is Thymidylate synthase, found in Pseudomonas fluorescens (strain SBW25).